Consider the following 236-residue polypeptide: NAD(P)H-hydrate epimerase (236 aa).

A YjeF N-terminal domain is found at 11–217 (AAALDRELMS…SIAKKYDFDV (207 aa)). 61–65 (NNGGD) contributes to the (6S)-NADPHX binding site. Positions 62 and 123 each coordinate K(+). (6S)-NADPHX-binding positions include 127–133 (GFSFSGE) and aspartate 156. Serine 159 contacts K(+).

It belongs to the NnrE/AIBP family. It depends on K(+) as a cofactor.

Its subcellular location is the cytoplasm. The protein localises to the mitochondrion. It carries out the reaction (6R)-NADHX = (6S)-NADHX. The catalysed reaction is (6R)-NADPHX = (6S)-NADPHX. Its function is as follows. Catalyzes the epimerization of the S- and R-forms of NAD(P)HX, a damaged form of NAD(P)H that is a result of enzymatic or heat-dependent hydration. This is a prerequisite for the S-specific NAD(P)H-hydrate dehydratase to allow the repair of both epimers of NAD(P)HX. The polypeptide is NAD(P)H-hydrate epimerase (Neurospora crassa (strain ATCC 24698 / 74-OR23-1A / CBS 708.71 / DSM 1257 / FGSC 987)).